Reading from the N-terminus, the 336-residue chain is Ribosomal RNA large subunit methyltransferase F (336 aa).

The protein belongs to the methyltransferase superfamily. METTL16/RlmF family.

It localises to the cytoplasm. The enzyme catalyses adenosine(1618) in 23S rRNA + S-adenosyl-L-methionine = N(6)-methyladenosine(1618) in 23S rRNA + S-adenosyl-L-homocysteine + H(+). Functionally, specifically methylates the adenine in position 1618 of 23S rRNA. The protein is Ribosomal RNA large subunit methyltransferase F of Serratia proteamaculans (strain 568).